Reading from the N-terminus, the 641-residue chain is 1-deoxy-D-xylulose-5-phosphate synthase (641 aa).

Thiamine diphosphate-binding positions include His-71 and 112 to 114 (SHA). Asp-144 serves as a coordination point for Mg(2+). Thiamine diphosphate is bound by residues 145–146 (GA), Asn-173, Tyr-284, and Glu-365. Asn-173 contacts Mg(2+).

The protein belongs to the transketolase family. DXPS subfamily. Homodimer. Mg(2+) serves as cofactor. The cofactor is thiamine diphosphate.

The catalysed reaction is D-glyceraldehyde 3-phosphate + pyruvate + H(+) = 1-deoxy-D-xylulose 5-phosphate + CO2. It functions in the pathway metabolic intermediate biosynthesis; 1-deoxy-D-xylulose 5-phosphate biosynthesis; 1-deoxy-D-xylulose 5-phosphate from D-glyceraldehyde 3-phosphate and pyruvate: step 1/1. In terms of biological role, catalyzes the acyloin condensation reaction between C atoms 2 and 3 of pyruvate and glyceraldehyde 3-phosphate to yield 1-deoxy-D-xylulose-5-phosphate (DXP). The chain is 1-deoxy-D-xylulose-5-phosphate synthase from Mycolicibacterium paratuberculosis (strain ATCC BAA-968 / K-10) (Mycobacterium paratuberculosis).